A 365-amino-acid chain; its full sequence is Peptide chain release factor 2 (365 aa).

Gln-251 carries the N5-methylglutamine modification.

It belongs to the prokaryotic/mitochondrial release factor family. Post-translationally, methylated by PrmC. Methylation increases the termination efficiency of RF2.

The protein resides in the cytoplasm. Its function is as follows. Peptide chain release factor 2 directs the termination of translation in response to the peptide chain termination codons UGA and UAA. The chain is Peptide chain release factor 2 from Campylobacter jejuni subsp. jejuni serotype O:6 (strain 81116 / NCTC 11828).